A 337-amino-acid polypeptide reads, in one-letter code: GDP-fucose transporter, Golgi (337 aa).

Transmembrane regions (helical) follow at residues 13–35 (NKYL…TVFV), 45–67 (VNLG…ICFV), 95–117 (ILPL…SYVT), 121–140 (YYIG…YVIL), 145–163 (SFKC…WLGV), 173–192 (SWRG…MFSI), 205–227 (VWLL…IIIN), and 242–264 (SWFW…VTAL).

Belongs to the TPT transporter family. SLC35C subfamily.

Its subcellular location is the golgi apparatus membrane. In terms of biological role, involved in GDP-fucose import from the cytoplasm into the Golgi lumen. Plays a major role in the fucosylation of N-glycans. Functions redundantly with Efr in the O-fucosylation of Notch, positively regulating Notch signaling. This Drosophila melanogaster (Fruit fly) protein is GDP-fucose transporter, Golgi.